A 370-amino-acid chain; its full sequence is A-type ATP synthase subunit C (370 aa).

The protein belongs to the V-ATPase V0D/AC39 subunit family. In terms of assembly, has multiple subunits with at least A(3), B(3), C, D, E, F, H, I and proteolipid K(x).

The protein localises to the cell membrane. In terms of biological role, component of the A-type ATP synthase that produces ATP from ADP in the presence of a proton gradient across the membrane. This Pyrococcus abyssi (strain GE5 / Orsay) protein is A-type ATP synthase subunit C.